A 220-amino-acid chain; its full sequence is tRNA (guanine-N(7)-)-methyltransferase (220 aa).

S-adenosyl-L-methionine is bound by residues glutamate 46, aspartate 71, aspartate 100, and aspartate 122. Aspartate 122 is an active-site residue. Substrate-binding positions include lysine 126, aspartate 158, and 196–199 (TEYE).

The protein belongs to the class I-like SAM-binding methyltransferase superfamily. TrmB family.

It carries out the reaction guanosine(46) in tRNA + S-adenosyl-L-methionine = N(7)-methylguanosine(46) in tRNA + S-adenosyl-L-homocysteine. It participates in tRNA modification; N(7)-methylguanine-tRNA biosynthesis. Functionally, catalyzes the formation of N(7)-methylguanine at position 46 (m7G46) in tRNA. This is tRNA (guanine-N(7)-)-methyltransferase from Malacoplasma penetrans (strain HF-2) (Mycoplasma penetrans).